The sequence spans 205 residues: MIASFDIGIKNFAFAVKRDGEFVLVENVNLLGDFVTKNDLNKTPKSALVEMMDRLNLDSKGQIKKTMVESILTAQKKSSPKQRAIDLGVKLFETMDRYRSFWTECDTFLVERQMVSNMQALKLSHYLEAYLKIHYPDKSVVNYSASNKTRKLGAPPLPTKPDRKRWTVEYAASILTGRHLDKFQSCPKKDDLADVVCMIEAYQKM.

This sequence belongs to the IIV-6 170L family.

This is an uncharacterized protein from Invertebrate iridescent virus 3 (IIV-3).